A 288-amino-acid polypeptide reads, in one-letter code: L-threonine kinase (288 aa).

80-90 is a binding site for ATP; it reads PIAKGMASSTA.

This sequence belongs to the GHMP kinase family. PduX subfamily.

It is found in the cytoplasm. It catalyses the reaction L-threonine + ATP = O-phospho-L-threonine + ADP + H(+). Its pathway is cofactor biosynthesis; adenosylcobalamin biosynthesis. It participates in polyol metabolism; 1,2-propanediol degradation. L-threonine kinase that catalyzes the conversion of L-threonine to L-threonine-O-3-phosphate. Involved in the de novo synthesis of adenosylcobalamin (coenzyme B12) and the assimilation of cobyric acid. Functionally, expression of a cosmid containing the full 21-gene pdu operon in E.coli allows E.coli to grow on 1,2-propanediol (1,2-PD) with the appearance of bacterial microcompartments (BMC) in its cytoplasm. In terms of biological role, the 1,2-PD-specific bacterial microcompartment (BMC) concentrates low levels of 1,2-PD catabolic enzymes, concentrates volatile reaction intermediates thus enhancing pathway flux and keeps the level of toxic, mutagenic propionaldehyde low. This gene probably benefits from its induction via the Pdu promoter, rather than a physical interaction with the BMC. The protein is L-threonine kinase of Citrobacter freundii.